A 1262-amino-acid chain; its full sequence is MGDMKTPDFDDLLAAFDIPDPTSLDAKEAIQAPSEENESPLKSSGMCIDENVSLSHSGSAPDVPAVSVIVKNTSRQESFEAEKDHIAPSLLHNGFRGSDLPPDSHHCGKFDSTFINGDSARSFTSKLEPSKSEPLPTFNQFSPISSPEPEDPVKDNGFGIKSKHSDSYFPPPPGTVGGPVLEALSKFPVPELHMFDHFCKKEPKPEPLPLESQQEHEQGGQKVVEPHKDLDSSRFFGEALEFNSHPSNSIGEPKKLAPELSACSSVPPRQRLKPAHSKLSSCVAALVALQAKRVANVTKEDQPGHTKDSSGPTKEGSKGSPKMPKSPKSPRSPLEATRKSIKPSDSPRSICSDSSSKGSPSVAASSPPAIPKVRIKTIKTSSGEIKRTVTRILPDPDDPSKSPAESPAGSTITEAPSEAPGDEGTAMPVEEHFSEAGIHSGSPQGDRKGDENMIKTSDSSSPCRISGSRVPKGSALNSQASKKQQSTAPQASTPAASLLPKAVHLANLNLVPHSVAASVTAKSSAQRRSQPQVTQMTVPLVHQVKKAAPLIVEVFNKVLHSSNPVPLYAPNLSPPADSRIHVPASGYCCLECGDAFALEKSLSQHYSRRSVHIEVLCTLCSKTLLFFNKCSLLRHARDHKSKGLVMQCSQLLVKPISADQMFVAAPVNSTAPATPAASSSPKPSPTLDNASSVIPALPLYPDPVRLIRYGTKCPECHKQMRDYMVLATHFQRTTEETEGLTCQVCQMLLPNQCSFCAHQRIHAHKSPYCCPECGVLCRSAYFQTHVKENCLHYARKVGYRCIHCGVIHLTLALLKSHIQERHCQVFHKCAFCPMAFKTASSTMDHSTTQHPTQPHKPSQLIYKCSCEMVFNKKRHIQQHFYQNVSKTQAGVFKCPECPLLFLQKPELMQHVKNTHGVPRNVEELSSLQSSTDTSSNRPGSRAPAEPPATNVAARGSSLTAGRWGRPEAHRRAEARPRMRSTGWTCQECQEWVPDRESYVSHMKKSHGRTLKRYPCRQCEQSFHNPSSLRKHIRNNHDTVKKVYTCGYCTEDSPSFPRPSLLESHISLMHGIRNPDLSQTSKVRHPGGPSPQVNHLKRPVSRMADAPGTSNGATVSSTKRHKSLFQCAKCTFATDSELEFQSHIPQHQVDSSTAQCLLCGLCYTSTSSLNRHLFIVHKVRDQEEGGEDIVEVKVEAPDSEACSGEEVAMETKENGLEECASEPLVTDLGGQQGLALDEDSAQDPQNQPQASQDQNSHALSPQV.

A disordered region spans residues 23–45 (SLDAKEAIQAPSEENESPLKSSG). 4 positions are modified to phosphoserine: Ser-78, Ser-142, Ser-145, and Ser-146. Disordered stretches follow at residues 122 to 174 (SFTS…PPPG), 200 to 278 (KKEP…AHSK), and 294 to 494 (VANV…ASTP). Glycyl lysine isopeptide (Lys-Gly) (interchain with G-Cter in SUMO2) cross-links involve residues Lys-200 and Lys-204. 2 stretches are compositionally biased toward basic and acidic residues: residues 213 to 232 (QQEHEQGGQKVVEPHKDLDS) and 298 to 308 (TKEDQPGHTKD). Residues 343–367 (PSDSPRSICSDSSSKGSPSVAASSP) are compositionally biased toward low complexity. Polar residues predominate over residues 454-463 (IKTSDSSSPC). The span at 484 to 494 (QQSTAPQASTP) shows a compositional bias: low complexity. Ser-529 is modified (phosphoserine). Lys-546 is covalently cross-linked (Glycyl lysine isopeptide (Lys-Gly) (interchain with G-Cter in SUMO2)). Phosphoserine is present on Ser-573. The C2H2-type 1; atypical zinc-finger motif lies at 587–612 (YCCLECGDAFALEKSLSQHYSRRSVH). A C2H2-type 2; atypical zinc finger spans residues 615-639 (VLCTLCSKTLLFFNKCSLLRHARDH). A Phosphoserine modification is found at Ser-691. The segment at 711–731 (TKCPECHKQMRDYMVLATHFQ) adopts a C2H2-type 3; degenerate zinc-finger fold. Residues 740 to 764 (LTCQVCQMLLPNQCSFCAHQRIHAH) form a C2H2-type 4 zinc finger. A C2H2-type 5; atypical zinc finger spans residues 768 to 790 (YCCPECGVLCRSAYFQTHVKENC). 3 C2H2-type zinc fingers span residues 799–822 (YRCIHCGVIHLTLALLKSHIQERH), 827–850 (HKCAFCPMAFKTASSTMDHSTTQH), and 892–915 (FKCPECPLLFLQKPELMQHVKNTH). A compositionally biased stretch (low complexity) spans 924-935 (LSSLQSSTDTSS). The segment at 924-979 (LSSLQSSTDTSSNRPGSRAPAEPPATNVAARGSSLTAGRWGRPEAHRRAEARPRMR) is disordered. A compositionally biased stretch (basic and acidic residues) spans 964 to 976 (GRPEAHRRAEARP). 2 consecutive C2H2-type zinc fingers follow at residues 983-1006 (WTCQECQEWVPDRESYVSHMKKSH) and 1013-1036 (YPCRQCEQSFHNPSSLRKHIRNNH). A C2H2-type 11; atypical zinc finger spans residues 1043–1069 (YTCGYCTEDSPSFPRPSLLESHISLMH). Ser-1089 carries the post-translational modification Phosphoserine. Residues 1124–1146 (FQCAKCTFATDSELEFQSHIPQH) form a C2H2-type 12; atypical zinc finger. The C2H2-type 13 zinc finger occupies 1153–1176 (AQCLLCGLCYTSTSSLNRHLFIVH). Phosphoserine occurs at positions 1198 and 1202. Positions 1222–1262 (PLVTDLGGQQGLALDEDSAQDPQNQPQASQDQNSHALSPQV) are disordered. A compositionally biased stretch (polar residues) spans 1241-1262 (QDPQNQPQASQDQNSHALSPQV).

This sequence belongs to the krueppel C2H2-type zinc-finger protein family. In terms of assembly, interacts with ZMYND8. Expressed in the brain.

The protein localises to the nucleus. Its function is as follows. May be involved in transcriptional regulation. The polypeptide is Zinc finger protein 592 (Znf592) (Mus musculus (Mouse)).